An 839-amino-acid polypeptide reads, in one-letter code: A disintegrin and metalloproteinase with thrombospondin motifs 4 (839 aa).

Positions 1–51 (MSHMDSHPGRGLADGWLWGIQPRLLLPTVPVSGSRLVWLLLLASLLPSAWP) are cleaved as a signal peptide. Positions 52-212 (ASPLPREEEI…PSPSPRRAKR (161 aa)) are excised as a propeptide. An N-linked (GlcNAc...) asparagine glycan is attached at asparagine 68. The interval 166–209 (EGGAPNSAGGPGAHILRRKSPVSGQGPMCNVKAPPGKPSPSPRR) is disordered. The Cysteine switch motif lies at 192–199 (PMCNVKAP). Cysteine 194 contributes to the Zn(2+) binding site. Residues 218–428 (RFVETLVVAD…GFGHCLLDKP (211 aa)) enclose the Peptidase M12B domain. Intrachain disulfides connect cysteine 293–cysteine 345, cysteine 322–cysteine 327, cysteine 339–cysteine 423, cysteine 377–cysteine 407, cysteine 449–cysteine 472, cysteine 460–cysteine 482, cysteine 467–cysteine 501, cysteine 495–cysteine 506, cysteine 532–cysteine 569, cysteine 536–cysteine 574, and cysteine 547–cysteine 559. Residue histidine 361 coordinates Zn(2+). Glutamate 362 is an active-site residue. Positions 365 and 371 each coordinate Zn(2+). The region spanning 437-519 (TFPGKDYDAD…DQLQAFNVPQ (83 aa)) is the Disintegrin domain. In terms of domain architecture, TSP type-1 spans 520-575 (AGGWGPWGSWGDCSRSCGGGVQFSSRDCTRPVPRNGGKYCEGRRTRFRSCNTQDCP). Residues 686 to 839 (SKQSGSFKKF…LRRRSWAGRK (154 aa)) form a spacer region.

Interacts with SRPX2. Zn(2+) is required as a cofactor. The precursor is cleaved by a furin endopeptidase. Post-translationally, glycosylated. Can be O-fucosylated by POFUT2 on a serine or a threonine residue found within the consensus sequence C1-X(2)-(S/T)-C2-G of the TSP type-1 repeat domains where C1 and C2 are the first and second cysteine residue of the repeat, respectively. Fucosylated repeats can then be further glycosylated by the addition of a beta-1,3-glucose residue by the glucosyltransferase, B3GALTL. Fucosylation mediates the efficient secretion of ADAMTS family members. Can also be C-glycosylated with one or two mannose molecules on tryptophan residues within the consensus sequence W-X-X-W of the TPRs, and N-glycosylated. These other glycosylations can also facilitate secretion.

The protein resides in the secreted. Its subcellular location is the extracellular space. It is found in the extracellular matrix. The catalysed reaction is Glutamyl endopeptidase. Bonds cleaved include 370-Thr-Glu-Gly-Glu-|-Ala-Arg-Gly-Ser-377 in the interglobular domain of mammalian aggrecan.. Cleaves aggrecan, a cartilage proteoglycan, at the '392-Glu-|-Ala-393' site and may be involved in its turnover. Also cleaves COMP. May play an important role in the destruction of aggrecan in arthritic diseases. The protein is A disintegrin and metalloproteinase with thrombospondin motifs 4 (ADAMTS4) of Bos taurus (Bovine).